The sequence spans 108 residues: MGVEVQRISPGDGKNFPKPGDTVSIHYTGTLADGSKFDSSRDRPGTFVTQIGVGRVIKGWDEGVLQLSVGEKAKLICTPDYAYGARGFPPVIPPNATLTFEVELLKIN.

The interval 1 to 20 (MGVEVQRISPGDGKNFPKPG) is disordered. The PPIase FKBP-type domain maps to 20-108 (GDTVSIHYTG…TFEVELLKIN (89 aa)).

It belongs to the FKBP-type PPIase family. FKBP1 subfamily.

The protein localises to the cytoplasm. It carries out the reaction [protein]-peptidylproline (omega=180) = [protein]-peptidylproline (omega=0). With respect to regulation, inhibited by both FK506 and rapamycin. Functionally, PPIases accelerate the folding of proteins. It catalyzes the cis-trans isomerization of proline imidic peptide bonds in oligopeptides. This is FK506-binding protein 1A (fprA) from Emericella nidulans (strain FGSC A4 / ATCC 38163 / CBS 112.46 / NRRL 194 / M139) (Aspergillus nidulans).